The following is a 343-amino-acid chain: Phenylalanine--tRNA ligase alpha subunit (343 aa).

Residue E256 participates in Mg(2+) binding.

The protein belongs to the class-II aminoacyl-tRNA synthetase family. Phe-tRNA synthetase alpha subunit type 1 subfamily. In terms of assembly, tetramer of two alpha and two beta subunits. It depends on Mg(2+) as a cofactor.

It localises to the cytoplasm. It catalyses the reaction tRNA(Phe) + L-phenylalanine + ATP = L-phenylalanyl-tRNA(Phe) + AMP + diphosphate + H(+). The sequence is that of Phenylalanine--tRNA ligase alpha subunit from Prosthecochloris aestuarii (strain DSM 271 / SK 413).